We begin with the raw amino-acid sequence, 360 residues long: sn-glycerol-3-phosphate import ATP-binding protein UgpC (360 aa).

An ABC transporter domain is found at 4 to 235; the sequence is LSLKGVRKSY…PATTFVASFI (232 aa). 37–44 is a binding site for ATP; sequence GPSGCGKS.

It belongs to the ABC transporter superfamily. sn-glycerol-3-phosphate importer (TC 3.A.1.1.3) family. In terms of assembly, the complex is composed of two ATP-binding proteins (UgpC), two transmembrane proteins (UgpA and UgpE) and a solute-binding protein (UgpB).

It is found in the cell inner membrane. The enzyme catalyses sn-glycerol 3-phosphate(out) + ATP + H2O = sn-glycerol 3-phosphate(in) + ADP + phosphate + H(+). Functionally, part of the ABC transporter complex UgpBAEC involved in sn-glycerol-3-phosphate (G3P) import. Responsible for energy coupling to the transport system. The chain is sn-glycerol-3-phosphate import ATP-binding protein UgpC from Burkholderia thailandensis (strain ATCC 700388 / DSM 13276 / CCUG 48851 / CIP 106301 / E264).